We begin with the raw amino-acid sequence, 276 residues long: Aldo-keto reductase Mkms_1985 (276 aa).

Y50 (proton donor) is an active-site residue. 8 residues coordinate NADPH: L190, I228, K230, S231, V232, R236, S239, and N240. The segment at 257–276 (SSLEDGSRLGPDPKTFNFTG) is disordered.

The protein belongs to the aldo/keto reductase family.

The polypeptide is Aldo-keto reductase Mkms_1985 (Mycobacterium sp. (strain KMS)).